The sequence spans 866 residues: Probable beta-glucosidase F (866 aa).

Residues 1–20 (MAAFPAYLALLSYLVPGALS) form the signal peptide. N-linked (GlcNAc...) asparagine glycans are attached at residues Asn-65, Asn-73, and Asn-257. Asp-285 is a catalytic residue. N-linked (GlcNAc...) asparagine glycans are attached at residues Asn-328, Asn-360, Asn-395, Asn-421, Asn-474, Asn-659, Asn-664, and Asn-724. The tract at residues 725–748 (SSKTYPYPDGYTTEPKPAPRAGGA) is disordered.

Belongs to the glycosyl hydrolase 3 family.

It localises to the secreted. It carries out the reaction Hydrolysis of terminal, non-reducing beta-D-glucosyl residues with release of beta-D-glucose.. It functions in the pathway glycan metabolism; cellulose degradation. In terms of biological role, beta-glucosidases are one of a number of cellulolytic enzymes involved in the degradation of cellulosic biomass. Catalyzes the last step releasing glucose from the inhibitory cellobiose. The polypeptide is Probable beta-glucosidase F (bglF) (Aspergillus flavus (strain ATCC 200026 / FGSC A1120 / IAM 13836 / NRRL 3357 / JCM 12722 / SRRC 167)).